Here is a 322-residue protein sequence, read N- to C-terminus: Cytochrome c biogenesis protein CcsA (322 aa).

7 helical membrane-spanning segments follow: residues 9-29, 44-64, 68-88, 143-163, 226-246, 260-274, and 289-309; these read ILTHISFSTISIVITIHLITL, GMIVTFFSITGFLVSRWVSSG, LSNLYESLIFLSWALYILHTI, MLLSYATLLCGSLLSAAILII, IISLGFTLLTIGILCGAVWAN, TWAFITWTIFAIYLH, and IASIGFLIIWICYFGINLLGI.

The protein belongs to the CcmF/CycK/Ccl1/NrfE/CcsA family. May interact with Ccs1.

The protein localises to the plastid. It is found in the chloroplast thylakoid membrane. In terms of biological role, required during biogenesis of c-type cytochromes (cytochrome c6 and cytochrome f) at the step of heme attachment. In Hordeum vulgare (Barley), this protein is Cytochrome c biogenesis protein CcsA.